Consider the following 511-residue polypeptide: Bifunctional purine biosynthesis protein PurH (511 aa).

An MGS-like domain is found at 1-145; it reads MKKRALVSVS…KNHKFVSVIV (145 aa).

This sequence belongs to the PurH family.

The catalysed reaction is (6R)-10-formyltetrahydrofolate + 5-amino-1-(5-phospho-beta-D-ribosyl)imidazole-4-carboxamide = 5-formamido-1-(5-phospho-D-ribosyl)imidazole-4-carboxamide + (6S)-5,6,7,8-tetrahydrofolate. The enzyme catalyses IMP + H2O = 5-formamido-1-(5-phospho-D-ribosyl)imidazole-4-carboxamide. It participates in purine metabolism; IMP biosynthesis via de novo pathway; 5-formamido-1-(5-phospho-D-ribosyl)imidazole-4-carboxamide from 5-amino-1-(5-phospho-D-ribosyl)imidazole-4-carboxamide (10-formyl THF route): step 1/1. The protein operates within purine metabolism; IMP biosynthesis via de novo pathway; IMP from 5-formamido-1-(5-phospho-D-ribosyl)imidazole-4-carboxamide: step 1/1. This chain is Bifunctional purine biosynthesis protein PurH, found in Bacillus cereus (strain ZK / E33L).